Consider the following 849-residue polypeptide: Probable ATP-dependent RNA helicase ddx20 (849 aa).

The segment at 9–39 (FSNPMNSNSSNNIENNNNSNNNNNNFKNNFK) is disordered. A Q motif motif is present at residues 55 to 83 (ITFSELLLQKEVLKGLEDGGYQRPSPIQL). Residues R77, Q82, 99–106 (AKSGTGKT), and 102–107 (GTGKTI) each bind ATP. The region spanning 86 to 319 (IPLGISGVDL…KLYMNNENLV (234 aa)) is the Helicase ATP-binding domain. Residues 255 to 258 (DEAD) carry the DEAD box motif. In terms of domain architecture, Helicase C-terminal spans 355–499 (KCKSLVLVLE…QIENENENEN (145 aa)). Disordered regions lie at residues 480 to 504 (QQQQQQQQQQQIENENENENNNNNE), 572 to 644 (INEN…ENDN), 667 to 737 (SNNN…YPHY), and 761 to 817 (NNYN…NNPY). 3 stretches are compositionally biased toward acidic residues: residues 583 to 595 (NEDEEEEQEEDDY), 604 to 615 (EDEEEEQEEDDY), and 624 to 644 (EEEEQEQQEEDDDNYNYENDN). Composition is skewed to low complexity over residues 667-687 (SNNNNNNNKNKYGNTINNNHY) and 696-720 (KNSINNNKFKNKNINNNDQRNSQSN).

This sequence belongs to the DEAD box helicase family. DDX20 subfamily. Part of the core SMN complex.

The protein resides in the cytoplasm. It localises to the nucleus. The catalysed reaction is ATP + H2O = ADP + phosphate + H(+). The SMN complex catalyzes the assembly of small nuclear ribonucleoproteins (snRNPs), the building blocks of the spliceosome, and thereby plays an important role in the splicing of cellular pre-mRNAs. Most spliceosomal snRNPs contain a common set of Sm proteins SNRPB, SNRPD1, SNRPD2, SNRPD3, SNRPE, SNRPF and SNRPG that assemble in a heptameric protein ring on the Sm site of the small nuclear RNA to form the core snRNP (Sm core). In the cytosol, the Sm proteins SNRPD1, SNRPD2, SNRPE, SNRPF and SNRPG are trapped in an inactive 6S pICln-Sm complex by the chaperone CLNS1A that controls the assembly of the core snRNP. To assemble core snRNPs, the SMN complex accepts the trapped 5Sm proteins from CLNS1A forming an intermediate. Binding of snRNA inside 5Sm triggers eviction of the SMN complex, thereby allowing binding of SNRPD3 and SNRPB to complete assembly of the core snRNP. May also play a role in the metabolism of small nucleolar ribonucleoprotein (snoRNPs). This Dictyostelium discoideum (Social amoeba) protein is Probable ATP-dependent RNA helicase ddx20 (ddx20).